The chain runs to 184 residues: dITP/XTP pyrophosphatase (184 aa).

8–13 (TGNKGK) lines the substrate pocket. Mg(2+) contacts are provided by E37 and D66. D66 serves as the catalytic Proton acceptor. Substrate-binding positions include S67, 142–145 (FGYD), K163, and 168–169 (HR).

It belongs to the HAM1 NTPase family. Homodimer. It depends on Mg(2+) as a cofactor.

It carries out the reaction XTP + H2O = XMP + diphosphate + H(+). It catalyses the reaction dITP + H2O = dIMP + diphosphate + H(+). The enzyme catalyses ITP + H2O = IMP + diphosphate + H(+). In terms of biological role, pyrophosphatase that catalyzes the hydrolysis of nucleoside triphosphates to their monophosphate derivatives, with a high preference for the non-canonical purine nucleotides XTP (xanthosine triphosphate), dITP (deoxyinosine triphosphate) and ITP. Seems to function as a house-cleaning enzyme that removes non-canonical purine nucleotides from the nucleotide pool, thus preventing their incorporation into DNA/RNA and avoiding chromosomal lesions. This chain is dITP/XTP pyrophosphatase, found in Methanosarcina mazei (strain ATCC BAA-159 / DSM 3647 / Goe1 / Go1 / JCM 11833 / OCM 88) (Methanosarcina frisia).